The following is a 206-amino-acid chain: Putative 3-methyladenine DNA glycosylase (206 aa).

It belongs to the DNA glycosylase MPG family.

In Salinibacter ruber (strain DSM 13855 / M31), this protein is Putative 3-methyladenine DNA glycosylase.